Here is a 74-residue protein sequence, read N- to C-terminus: Anaphase-promoting complex subunit 13 (74 aa).

Belongs to the APC13 family. As to quaternary structure, the APC/C is composed of at least 12 subunits.

It is found in the nucleus. It functions in the pathway protein modification; protein ubiquitination. Functionally, component of the anaphase promoting complex/cyclosome (APC/C), a cell cycle-regulated E3 ubiquitin ligase that controls progression through mitosis and the G1 phase of the cell cycle. The APC/C complex acts by mediating ubiquitination and subsequent degradation of target proteins: it mainly mediates the formation of 'Lys-11'-linked polyubiquitin chains and, to a lower extent, the formation of 'Lys-48'- and 'Lys-63'-linked polyubiquitin chains. The APC/C complex catalyzes assembly of branched 'Lys-11'-/'Lys-48'-linked branched ubiquitin chains on target proteins. The protein is Anaphase-promoting complex subunit 13 (anapc13) of Xenopus tropicalis (Western clawed frog).